The sequence spans 526 residues: Histidine-rich glycoprotein (526 aa).

Residues 1 to 8 (ATLQCSWA) form the signal peptide. 2 Cystatin domains span residues 9 to 126 (LTPT…SALA) and 127 to 243 (NTKD…NISG). Disulfide bonds link Cys-14–Cys-505, Cys-68–Cys-79, Cys-95–Cys-116, Cys-193–Cys-415, Cys-207–Cys-230, and Cys-272–Cys-302. Residues 31-74 (WRRDGYLFQLLRVADAHLDGAESATVYYLVLDVKETDCSVLSRK) are interaction with ATP5F1A. 2 N-linked (GlcNAc...) asparagine glycosylation sites follow: Asn-115 and Asn-192. An N-linked (GlcNAc...) asparagine glycan is attached at Asn-240. Positions 243–449 (GFRPHLGKTP…GKRGPGKGHF (207 aa)) are disordered. Residues 260–269 (DHHHPHKPHK) are compositionally biased toward basic residues. N-linked (GlcNAc...) asparagine glycosylation occurs at Asn-310. Positions 328 to 346 (PPPHGHHPHGPPPHGHHPH) are enriched in basic residues. Over residues 347–401 (GPPPHGHPPHGPPPRHPPHGPPPHGHPPHGPPPHGHPPHGPPPHGHPPHGPPPHG) the composition is skewed to pro residues. The span at 408–429 (GFHDHGPCDPPSHKEGPQDLHQ) shows a compositional bias: basic and acidic residues. Basic residues predominate over residues 438 to 449 (HPGKRGPGKGHF). An N-linked (GlcNAc...) asparagine glycan is attached at Asn-485.

Interacts with THBS1 (via the TSP type I repeats); the interaction blocks the antiangiogenic effect of THBS1 with CD36. Interacts with THBS2; the interaction blocks the antiangiogenic effect of THBS2 with CD36. Interacts with HPSE; the interaction is enhanced at acidic pH, partially inhibits binding of HPSE to cell surface receptors and modulates its enzymatic activity. Interacts (via the HRR domain) with TMP1; the interaction partially mediates the antiangiogenic properties of HRG. Interacts with kappa and lambda light chains of IgG molecules. Interacts with ATP5F1A; the interaction occurs on the surface of T-cells and alters their cell morphology in concert with CONA. Binds IgG molecules containing kappa and lambda light chains and inhibits the formation of insoluble immunoglobulin complexes. Interacts with F12; the interaction, which is enhanced in the presence of zinc ions and inhibited by heparin-binding to HRG, inhibits factor XII autoactivation and contact-initiated coagulation. Interacts with PLG (via its Kringle domains); the interaction tethers PLG to the cell surface and enhances its activation. Interacts (via the HRR domain) with TPM1; the interaction appears to contribute to the antiangiogenic properties of the HRR domain. In terms of processing, N-glycosylated. Proteolytic cleavage produces several HRG fragments which are mostly disulfide-linked and, therefore, not released. On platelet activation, may release a 33 kDa antiangiogenic peptide which encompasses the HRR.

It is found in the secreted. Functionally, plasma glycoprotein that binds a number of ligands such as heme, heparin, heparan sulfate, thrombospondin, plasminogen, and divalent metal ions. Inhibits rosette formation. Acts as an adapter protein and implicated in regulating many processes such as immune complex and pathogen clearance, cell adhesion, angiogenesis, coagulation and fibrinolysis. Mediates clearance of necrotic cells through enhancing the phagocytosis of necrotic cells in a heparan sulfate-dependent pathway. This process can be regulated by the presence of certain HRG ligands such as heparin and zinc ions. Binds to IgG subclasses of immunoglobins containing kappa and lambda light chains with different affinities regulating their clearance and inhibiting the formation of insoluble immune complexes. Binds T-cells and alters the cell morphology Modulates angiogenesis by blocking the CD6-mediated antiangiongenic effect of thrombospondins, THBS1 and THBS2. Tethers plasminogen to the cell surface. The chain is Histidine-rich glycoprotein (HRG) from Oryctolagus cuniculus (Rabbit).